Here is a 238-residue protein sequence, read N- to C-terminus: NEDD4-binding protein 2-like 1 (238 aa).

Disordered regions lie at residues 1–36 and 183–212; these read MEDS…PRRH and VLHA…WNTY. A compositionally biased stretch (pro residues) spans 20–31; the sequence is QPPPRPPPARGP. The span at 192–212 shows a compositional bias: polar residues; sequence ANRNQGRNSEPSSGSGYWNTY.

As to quaternary structure, interacts with dynactin subunit proteins, including DCTN4, DCTN5 and DCTN5.

Its function is as follows. Might play a role in adipocyte differentiation and triglyceride accumulation. In Mus musculus (Mouse), this protein is NEDD4-binding protein 2-like 1 (N4bp2l1).